Reading from the N-terminus, the 555-residue chain is Dihydroxy-acid dehydratase (555 aa).

Cys-46 is a [2Fe-2S] cluster binding site. Asp-78 is a binding site for Mg(2+). Cys-119 is a [2Fe-2S] cluster binding site. Residues Asp-120 and Lys-121 each coordinate Mg(2+). Lys-121 bears the N6-carboxylysine mark. Cys-191 is a binding site for [2Fe-2S] cluster. A Mg(2+)-binding site is contributed by Glu-442. Ser-468 (proton acceptor) is an active-site residue.

Belongs to the IlvD/Edd family. In terms of assembly, homodimer. [2Fe-2S] cluster serves as cofactor. Mg(2+) is required as a cofactor.

The catalysed reaction is (2R)-2,3-dihydroxy-3-methylbutanoate = 3-methyl-2-oxobutanoate + H2O. The enzyme catalyses (2R,3R)-2,3-dihydroxy-3-methylpentanoate = (S)-3-methyl-2-oxopentanoate + H2O. It participates in amino-acid biosynthesis; L-isoleucine biosynthesis; L-isoleucine from 2-oxobutanoate: step 3/4. The protein operates within amino-acid biosynthesis; L-valine biosynthesis; L-valine from pyruvate: step 3/4. Its function is as follows. Functions in the biosynthesis of branched-chain amino acids. Catalyzes the dehydration of (2R,3R)-2,3-dihydroxy-3-methylpentanoate (2,3-dihydroxy-3-methylvalerate) into 2-oxo-3-methylpentanoate (2-oxo-3-methylvalerate) and of (2R)-2,3-dihydroxy-3-methylbutanoate (2,3-dihydroxyisovalerate) into 2-oxo-3-methylbutanoate (2-oxoisovalerate), the penultimate precursor to L-isoleucine and L-valine, respectively. This Thermus thermophilus (strain ATCC 27634 / DSM 579 / HB8) protein is Dihydroxy-acid dehydratase.